Consider the following 228-residue polypeptide: PKHD-type hydroxylase YbiX (228 aa).

In terms of domain architecture, Fe2OG dioxygenase spans 78 to 177 (TLSTPLFNRY…RVASFIWIQS (100 aa)). Fe cation is bound by residues His-96, Asp-98, and His-158. A 2-oxoglutarate-binding site is contributed by Arg-168.

Requires Fe(2+) as cofactor. L-ascorbate serves as cofactor.

The sequence is that of PKHD-type hydroxylase YbiX from Escherichia coli O157:H7.